Reading from the N-terminus, the 500-residue chain is Transcription factor-like 5 protein (500 aa).

Composition is skewed to pro residues over residues 1–12 (MSGPGPREPPPE) and 196–210 (AEPP…PPEP). Disordered stretches follow at residues 1 to 34 (MSGP…ALGE) and 191 to 211 (FNSI…PEPG). Positions 347 to 356 (MRQLDTNVER) are R3 epitope (recognized by Chagas's antibodies). Residues 365 to 410 (VGEGATATQGAWQSSESSQANLGEQAQSGPQGGRSQRRERHNRMER) form a disordered region. The span at 370-393 (TATQGAWQSSESSQANLGEQAQSG) shows a compositional bias: polar residues. Residues 400 to 450 (QRRERHNRMERDRRRRIRICCDELNLLVPFCNAETDKATTLQWTTAFLKYI) form the bHLH domain. Residues 481–500 (SLVTCPAQGSLQSSPSMEIK) are R1 epitope (recognized by Chagas's antibodies).

As to quaternary structure, efficient DNA binding requires dimerization with another bHLH protein. Isoform 3 is testis specific. Isoform 2 is pancreas specific.

The protein resides in the nucleus. Its function is as follows. Putative transcription factor. Isoform 3 may play a role in early spermatogenesis. This chain is Transcription factor-like 5 protein (TCFL5), found in Homo sapiens (Human).